The following is a 547-amino-acid chain: Chaperonin GroEL (547 aa).

ATP is bound by residues 30–33, Lys51, 87–91, Gly415, 480–482, and Asp496; these read TLGP, DGTTT, and NAA. Residues 525 to 547 are disordered; the sequence is KPDDKPAMPPMGGGMGGMGGMDF. Over residues 535 to 547 the composition is skewed to gly residues; it reads MGGGMGGMGGMDF.

Belongs to the chaperonin (HSP60) family. In terms of assembly, forms a cylinder of 14 subunits composed of two heptameric rings stacked back-to-back. Interacts with the co-chaperonin GroES.

The protein resides in the cytoplasm. The catalysed reaction is ATP + H2O + a folded polypeptide = ADP + phosphate + an unfolded polypeptide.. Together with its co-chaperonin GroES, plays an essential role in assisting protein folding. The GroEL-GroES system forms a nano-cage that allows encapsulation of the non-native substrate proteins and provides a physical environment optimized to promote and accelerate protein folding. The sequence is that of Chaperonin GroEL from Novosphingobium aromaticivorans (strain ATCC 700278 / DSM 12444 / CCUG 56034 / CIP 105152 / NBRC 16084 / F199).